Consider the following 477-residue polypeptide: 3-isopropylmalate dehydratase large subunit (477 aa).

[4Fe-4S] cluster is bound by residues cysteine 358, cysteine 419, and cysteine 422.

Belongs to the aconitase/IPM isomerase family. LeuC type 1 subfamily. In terms of assembly, heterodimer of LeuC and LeuD. The cofactor is [4Fe-4S] cluster.

The enzyme catalyses (2R,3S)-3-isopropylmalate = (2S)-2-isopropylmalate. Its pathway is amino-acid biosynthesis; L-leucine biosynthesis; L-leucine from 3-methyl-2-oxobutanoate: step 2/4. Functionally, catalyzes the isomerization between 2-isopropylmalate and 3-isopropylmalate, via the formation of 2-isopropylmaleate. The protein is 3-isopropylmalate dehydratase large subunit of Acinetobacter baylyi (strain ATCC 33305 / BD413 / ADP1).